Here is a 181-residue protein sequence, read N- to C-terminus: ADP-ribosylation factor 1 (181 aa).

The N-myristoyl glycine moiety is linked to residue Gly-2. GTP is bound by residues 24 to 31 (GLDAAGKT), 67 to 71 (DVGGQ), and 126 to 129 (NKQD).

This sequence belongs to the small GTPase superfamily. Arf family.

The protein localises to the golgi apparatus. The enzyme catalyses GTP + H2O = GDP + phosphate + H(+). In terms of biological role, GTP-binding protein involved in protein trafficking; may modulate vesicle budding and uncoating within the Golgi apparatus. The polypeptide is ADP-ribosylation factor 1 (ARF1) (Chlamydomonas reinhardtii (Chlamydomonas smithii)).